The primary structure comprises 296 residues: N-acetylmuramic acid 6-phosphate etherase (296 aa).

The region spanning V54–K217 is the SIS domain. Residue E82 is the Proton donor of the active site. Residue E113 is part of the active site.

The protein belongs to the GCKR-like family. MurNAc-6-P etherase subfamily. In terms of assembly, homodimer.

It catalyses the reaction N-acetyl-D-muramate 6-phosphate + H2O = N-acetyl-D-glucosamine 6-phosphate + (R)-lactate. The protein operates within amino-sugar metabolism; N-acetylmuramate degradation. Its function is as follows. Specifically catalyzes the cleavage of the D-lactyl ether substituent of MurNAc 6-phosphate, producing GlcNAc 6-phosphate and D-lactate. The protein is N-acetylmuramic acid 6-phosphate etherase of Listeria welshimeri serovar 6b (strain ATCC 35897 / DSM 20650 / CCUG 15529 / CIP 8149 / NCTC 11857 / SLCC 5334 / V8).